The primary structure comprises 488 residues: WD repeat-containing protein slp1 (488 aa).

2 disordered regions span residues 1–29 (MEIAGNSSTISPTFSTPTKKRNLVFPNSP) and 74–93 (CGSPRNKSRPASRSDRFIPS). Residues 7–17 (SSTISPTFSTP) are compositionally biased toward low complexity. WD repeat units lie at residues 178–215 (IDDYYLNLLDWSNLNVVAVALERNVYVWNADSGSVSAL), 219–258 (DESTYVASVKWSHDGSFLSVGLGNGLVDIYDVESQTKLRT), 261–298 (GHQARVGCLSWNRHVLSSGSRSGAIHHHDVRIANHQIG), 302–341 (GHSSEVCGLAWRSDGLQLASGGNDNVVQIWDARSSIPKFT), 344–386 (NHNA…RVNT), 388–429 (DAGS…LTKQ), and 434–473 (AHDTRVLYSALSPDGRILSTAASDENLKFWRVYDGDHVKR).

This sequence belongs to the WD repeat CDC20/Fizzy family. As to quaternary structure, interacts with cdc13, mad3 and mes1.

Required for mad2-dependent spindle checkpoint activation. Promotes ubiquitin-dependent degradation of cdc13 by the anaphase promoting complex/cyclosome (APC/C). This chain is WD repeat-containing protein slp1 (slp1), found in Schizosaccharomyces pombe (strain 972 / ATCC 24843) (Fission yeast).